A 337-amino-acid polypeptide reads, in one-letter code: Glyceraldehyde-3-phosphate dehydrogenase (337 aa).

NADP(+) contacts are provided by residues T11–V12, T34–R35, and G110. Position 139 to 141 (S139 to N141) interacts with D-glyceraldehyde 3-phosphate. C140 (nucleophile) is an active-site residue. D171 serves as a coordination point for NADP(+). H194 to G195 provides a ligand contact to D-glyceraldehyde 3-phosphate. Q300 lines the NADP(+) pocket.

It belongs to the glyceraldehyde-3-phosphate dehydrogenase family. Homotetramer.

It localises to the cytoplasm. It catalyses the reaction D-glyceraldehyde 3-phosphate + phosphate + NADP(+) = (2R)-3-phospho-glyceroyl phosphate + NADPH + H(+). The enzyme catalyses D-glyceraldehyde 3-phosphate + phosphate + NAD(+) = (2R)-3-phospho-glyceroyl phosphate + NADH + H(+). Its pathway is carbohydrate degradation; glycolysis; pyruvate from D-glyceraldehyde 3-phosphate: step 1/5. Its function is as follows. Exhibits a dual-cofactor specificity, with a marked preference for NADP(+) over NAD(+). In Methanothermus fervidus, this protein is Glyceraldehyde-3-phosphate dehydrogenase (gap).